The following is a 97-amino-acid chain: Nuclear protein 2 (97 aa).

The segment at 76–97 (LLNGQRKRRQRQLHPKMRTRLT) is disordered. Residues 80–97 (QRKRRQRQLHPKMRTRLT) show a composition bias toward basic residues.

The protein belongs to the NUPR family.

Its subcellular location is the nucleus. Its function is as follows. Acts as a transcriptional repressor by inhibiting gene expression at the NUPR1 promoter in a p53/TP53-dependent manner in cancer cells. Involved in the G1 cell cycle arrest, and in a decrease in cell viability and cell proliferation. Plays a role as a negative regulator of the protumoral factor NUPR1. The polypeptide is Nuclear protein 2 (Homo sapiens (Human)).